Here is a 339-residue protein sequence, read N- to C-terminus: Methionyl-tRNA formyltransferase (339 aa).

S110–P113 contacts (6S)-5,6,7,8-tetrahydrofolate.

It belongs to the Fmt family.

The enzyme catalyses L-methionyl-tRNA(fMet) + (6R)-10-formyltetrahydrofolate = N-formyl-L-methionyl-tRNA(fMet) + (6S)-5,6,7,8-tetrahydrofolate + H(+). Attaches a formyl group to the free amino group of methionyl-tRNA(fMet). The formyl group appears to play a dual role in the initiator identity of N-formylmethionyl-tRNA by promoting its recognition by IF2 and preventing the misappropriation of this tRNA by the elongation apparatus. This is Methionyl-tRNA formyltransferase from Prochlorococcus marinus (strain SARG / CCMP1375 / SS120).